Here is an 805-residue protein sequence, read N- to C-terminus: Polyribonucleotide nucleotidyltransferase (805 aa).

Asp491 and Asp497 together coordinate Mg(2+). The 60-residue stretch at Pro558–Ile617 folds into the KH domain. In terms of domain architecture, S1 motif spans Gly627–Arg694. Positions Asp702 to Phe805 are disordered. A compositionally biased stretch (polar residues) spans Tyr709–Asp721.

It belongs to the polyribonucleotide nucleotidyltransferase family. Mg(2+) is required as a cofactor.

Its subcellular location is the cytoplasm. The catalysed reaction is RNA(n+1) + phosphate = RNA(n) + a ribonucleoside 5'-diphosphate. Functionally, involved in mRNA degradation. Catalyzes the phosphorolysis of single-stranded polyribonucleotides processively in the 3'- to 5'-direction. This Anaplasma marginale (strain St. Maries) protein is Polyribonucleotide nucleotidyltransferase.